We begin with the raw amino-acid sequence, 259 residues long: UPF0246 protein NMB0895 (259 aa).

The protein belongs to the UPF0246 family.

The sequence is that of UPF0246 protein NMB0895 from Neisseria meningitidis serogroup B (strain ATCC BAA-335 / MC58).